The following is a 372-amino-acid chain: 4-hydroxy-3-methylbut-2-en-1-yl diphosphate synthase (flavodoxin) (372 aa).

[4Fe-4S] cluster-binding residues include cysteine 270, cysteine 273, cysteine 305, and glutamate 312.

The protein belongs to the IspG family. [4Fe-4S] cluster serves as cofactor.

It catalyses the reaction (2E)-4-hydroxy-3-methylbut-2-enyl diphosphate + oxidized [flavodoxin] + H2O + 2 H(+) = 2-C-methyl-D-erythritol 2,4-cyclic diphosphate + reduced [flavodoxin]. Its pathway is isoprenoid biosynthesis; isopentenyl diphosphate biosynthesis via DXP pathway; isopentenyl diphosphate from 1-deoxy-D-xylulose 5-phosphate: step 5/6. In terms of biological role, converts 2C-methyl-D-erythritol 2,4-cyclodiphosphate (ME-2,4cPP) into 1-hydroxy-2-methyl-2-(E)-butenyl 4-diphosphate. The protein is 4-hydroxy-3-methylbut-2-en-1-yl diphosphate synthase (flavodoxin) of Cronobacter sakazakii (strain ATCC BAA-894) (Enterobacter sakazakii).